Here is a 59-residue protein sequence, read N- to C-terminus: Large ribosomal subunit protein uL30 (59 aa).

Belongs to the universal ribosomal protein uL30 family. As to quaternary structure, part of the 50S ribosomal subunit.

The chain is Large ribosomal subunit protein uL30 from Citrobacter koseri (strain ATCC BAA-895 / CDC 4225-83 / SGSC4696).